A 789-amino-acid polypeptide reads, in one-letter code: Probable phosphoketolase 1 (789 aa).

It belongs to the XFP family. It depends on thiamine diphosphate as a cofactor.

This chain is Probable phosphoketolase 1, found in Rhizobium meliloti (strain 1021) (Ensifer meliloti).